Consider the following 110-residue polypeptide: RNA polymerase II transcriptional coactivator (110 aa).

A disordered region spans residues 1–50; that stretch reads MPKTKKKDSSSDSDSGPDDRIKPASKKAKESDAPNSDPKDSGENGATSWT. A compositionally biased stretch (basic and acidic residues) spans 17-42; the sequence is PDDRIKPASKKAKESDAPNSDPKDSG.

Belongs to the transcriptional coactivator PC4 family.

It localises to the nucleus. Its function is as follows. General coactivator that functions cooperatively with TAFs and mediates functional interactions between upstream activators and the general transcriptional machinery. Binds single-stranded DNA. Binds specifically to the NssBF element, a short nucleotide sequence of the 1731 retrotransposon, to repress promoter activity. The polypeptide is RNA polymerase II transcriptional coactivator (Ssb-c31a) (Drosophila melanogaster (Fruit fly)).